Consider the following 392-residue polypeptide: MTATRHFLLAAGGTGGHMLPAYALADELIARGHRVALVSDDRGLKIPGAPAELETHVLPAGRASGGPLGWLKGALAIRKGRRMAIELIDDFDPAVVVGFGGYPSLPSLLAAGATKRPRVIHEQNAVLGRVNRLMAPRVDAVAVAYHHIQRYPAGHELKMHITGNPVRDEIVAIREEGFPPLLEDGIFRLLVVGGSLGATVLSEVVPAAIAMLPRALLDRLQVVQQCREDDLEAVRARYAELGVAAECAPYIKDFPERLRWAHMVIARAGASTVAELACAGRPAIFVPYPHAMDDHQTYNVVDLVEAGGAISFRQSDFIPAEVAKHIQRMAVEPGVLEEAAERAASCGLPDATRDLADLVESFAAPPMMDVIRVGASLPRAASGIAAARREAK.

UDP-N-acetyl-alpha-D-glucosamine-binding positions include 14–16 (TGG), Asn124, Arg167, Ser195, Ile251, and Gln296.

It belongs to the glycosyltransferase 28 family. MurG subfamily.

It is found in the cell inner membrane. The enzyme catalyses di-trans,octa-cis-undecaprenyl diphospho-N-acetyl-alpha-D-muramoyl-L-alanyl-D-glutamyl-meso-2,6-diaminopimeloyl-D-alanyl-D-alanine + UDP-N-acetyl-alpha-D-glucosamine = di-trans,octa-cis-undecaprenyl diphospho-[N-acetyl-alpha-D-glucosaminyl-(1-&gt;4)]-N-acetyl-alpha-D-muramoyl-L-alanyl-D-glutamyl-meso-2,6-diaminopimeloyl-D-alanyl-D-alanine + UDP + H(+). Its pathway is cell wall biogenesis; peptidoglycan biosynthesis. Cell wall formation. Catalyzes the transfer of a GlcNAc subunit on undecaprenyl-pyrophosphoryl-MurNAc-pentapeptide (lipid intermediate I) to form undecaprenyl-pyrophosphoryl-MurNAc-(pentapeptide)GlcNAc (lipid intermediate II). In Sphingopyxis alaskensis (strain DSM 13593 / LMG 18877 / RB2256) (Sphingomonas alaskensis), this protein is UDP-N-acetylglucosamine--N-acetylmuramyl-(pentapeptide) pyrophosphoryl-undecaprenol N-acetylglucosamine transferase.